The following is a 78-amino-acid chain: RNA-binding protein KhpA (78 aa).

A KH domain is found at 29 to 78 (TIIYELSVAKPDIGKIIGKEGRTIKAIRTLLVSVASRNNVRVSLEIMEEK).

It belongs to the KhpA RNA-binding protein family.

The protein resides in the cytoplasm. Its function is as follows. A probable RNA-binding protein. This Chlamydia pneumoniae (Chlamydophila pneumoniae) protein is RNA-binding protein KhpA.